A 234-amino-acid chain; its full sequence is UPF0502 protein Bphy_5360 (234 aa).

This sequence belongs to the UPF0502 family.

The polypeptide is UPF0502 protein Bphy_5360 (Paraburkholderia phymatum (strain DSM 17167 / CIP 108236 / LMG 21445 / STM815) (Burkholderia phymatum)).